The sequence spans 256 residues: Trypsin alpha (256 aa).

A signal peptide spans 1-22 (MLKIVILLSAVVCALGGTVPEG). The propeptide at 23–30 (LLPQLDGR) is activation peptide. In terms of domain architecture, Peptidase S1 spans 31 to 254 (IVGGSATTIS…LRSWVISTAN (224 aa)). Cys-56 and Cys-72 are joined by a disulfide. Catalysis depends on charge relay system residues His-71 and Asp-116. 2 disulfides stabilise this stretch: Cys-180–Cys-197 and Cys-206–Cys-230. Residue Ser-210 is the Charge relay system of the active site.

It belongs to the peptidase S1 family.

The protein localises to the secreted. Its subcellular location is the extracellular space. It catalyses the reaction Preferential cleavage: Arg-|-Xaa, Lys-|-Xaa.. The protein is Trypsin alpha (alphaTry) of Drosophila erecta (Fruit fly).